We begin with the raw amino-acid sequence, 166 residues long: Crossover junction endodeoxyribonuclease RuvC (166 aa).

Active-site residues include Asp-7, Glu-67, and Asp-139. 3 residues coordinate Mg(2+): Asp-7, Glu-67, and Asp-139.

It belongs to the RuvC family. In terms of assembly, homodimer which binds Holliday junction (HJ) DNA. The HJ becomes 2-fold symmetrical on binding to RuvC with unstacked arms; it has a different conformation from HJ DNA in complex with RuvA. In the full resolvosome a probable DNA-RuvA(4)-RuvB(12)-RuvC(2) complex forms which resolves the HJ. The cofactor is Mg(2+).

The protein localises to the cytoplasm. It catalyses the reaction Endonucleolytic cleavage at a junction such as a reciprocal single-stranded crossover between two homologous DNA duplexes (Holliday junction).. Its function is as follows. The RuvA-RuvB-RuvC complex processes Holliday junction (HJ) DNA during genetic recombination and DNA repair. Endonuclease that resolves HJ intermediates. Cleaves cruciform DNA by making single-stranded nicks across the HJ at symmetrical positions within the homologous arms, yielding a 5'-phosphate and a 3'-hydroxyl group; requires a central core of homology in the junction. The consensus cleavage sequence is 5'-(A/T)TT(C/G)-3'. Cleavage occurs on the 3'-side of the TT dinucleotide at the point of strand exchange. HJ branch migration catalyzed by RuvA-RuvB allows RuvC to scan DNA until it finds its consensus sequence, where it cleaves and resolves the cruciform DNA. The protein is Crossover junction endodeoxyribonuclease RuvC of Paramagnetospirillum magneticum (strain ATCC 700264 / AMB-1) (Magnetospirillum magneticum).